The chain runs to 875 residues: MSDLAREITPVNIEEELKSSYLDYAMSVIVGRALPDVRDGLKPVHRRVLYAMNVLGNDWNKAYKKSARVVGDVIGKYHPHGDSAVYDTIVRMAQPFSLRYMLVDGQGNFGSIDGDSAAAMRYTEIRLAKIAHELMADLEKETVDFVDNYDGTEKIPDVMPTKIPNLLVNGSSGIAVGMATNIPPHNLTEVINGCLAYIDDEDISIEGLMEHIPGPDFPTAAIINGRRGIEEAYRTGRGKVYIRARAEVEVDAKTGRETIIVHEIPYQVNKARLIEKIAELVKEKRVEGISALRDESDKDGMRIVIEVKRDAVGEVVLNNLYSQTQLQVSFGINMVALHHGQPKIMNLKDIIAAFVRHRREVVTRRTIFELRKARDRAHILEALAVALANIDPIIELIRHAPTPAEAKTALVANPWQLGNVAAMLERAGDDAARPEWLEPEFGVRDGLYYLTEQQAQAILDLRLQKLTGLEHEKLLDEYKELLDQIAELLRILGSADRLMEVIREELELVREQFGDKRRTEITANSADINLEDLITQEDVVVTLSHQGYVKYQPLSEYEAQRRGGKGKSAARIKEEDFIDRLLVANTHDHILCFSSRGRVYSMKVYQLPEATRGARGRPIVNLLPLEQDERITAILPVTEFEEGVKVFMATANGTVKKTVLTEFNRLRTAGKVAIKLVDGDELIGVDLTSGEDEVMLFSAEGKVVRFKESSVRAMGCNTTGVRGIRLGEGDKVVSLIVPRGDGAILTATQNGYGKRTAVAEYPTKSRATKGVISIKVTERNGLVVGAVQVDDCDQIMMITDAGTLVRTRVSEISIVGRNTQGVILIRTAEDENVVGLQRVAEPVDEEDLDTIDGSAAEGDDEIAPEVDVDDEPEEE.

The 500-residue stretch at 34–533 (LPDVRDGLKP…NSADINLEDL (500 aa)) folds into the Topo IIA-type catalytic domain. Tyr122 functions as the O-(5'-phospho-DNA)-tyrosine intermediate in the catalytic mechanism. Residues 560 to 566 (QRRGGKG) carry the GyrA-box motif. A disordered region spans residues 841 to 875 (EPVDEEDLDTIDGSAAEGDDEIAPEVDVDDEPEEE). Residues 857–875 (EGDDEIAPEVDVDDEPEEE) show a composition bias toward acidic residues.

It belongs to the type II topoisomerase GyrA/ParC subunit family. In terms of assembly, heterotetramer, composed of two GyrA and two GyrB chains. In the heterotetramer, GyrA contains the active site tyrosine that forms a transient covalent intermediate with DNA, while GyrB binds cofactors and catalyzes ATP hydrolysis.

It is found in the cytoplasm. The catalysed reaction is ATP-dependent breakage, passage and rejoining of double-stranded DNA.. Its function is as follows. A type II topoisomerase that negatively supercoils closed circular double-stranded (ds) DNA in an ATP-dependent manner to modulate DNA topology and maintain chromosomes in an underwound state. Negative supercoiling favors strand separation, and DNA replication, transcription, recombination and repair, all of which involve strand separation. Also able to catalyze the interconversion of other topological isomers of dsDNA rings, including catenanes and knotted rings. Type II topoisomerases break and join 2 DNA strands simultaneously in an ATP-dependent manner. This chain is DNA gyrase subunit A, found in Shigella flexneri.